A 415-amino-acid polypeptide reads, in one-letter code: Putative glutamate--cysteine ligase 2 (415 aa).

This sequence belongs to the glutamate--cysteine ligase type 2 family. YbdK subfamily.

The enzyme catalyses L-cysteine + L-glutamate + ATP = gamma-L-glutamyl-L-cysteine + ADP + phosphate + H(+). Functionally, ATP-dependent carboxylate-amine ligase which exhibits weak glutamate--cysteine ligase activity. In Bordetella petrii (strain ATCC BAA-461 / DSM 12804 / CCUG 43448), this protein is Putative glutamate--cysteine ligase 2.